We begin with the raw amino-acid sequence, 128 residues long: MRFAIVVTGPAYGTQQASSAFQFAQALIAEGHELSCVFFYREGVYNANQLTSPASDEFDLVRGWQQLNAQHGVALNICVAAALRRGIVDETEAGRLGLASSNLQSGFTLSGLGALAEASLTCDRVVQF.

The active-site Cysteine persulfide intermediate is the C78.

The protein belongs to the DsrE/TusD family. As to quaternary structure, heterohexamer, formed by a dimer of trimers. The hexameric TusBCD complex contains 2 copies each of TusB, TusC and TusD. The TusBCD complex interacts with TusE.

The protein localises to the cytoplasm. Part of a sulfur-relay system required for 2-thiolation of 5-methylaminomethyl-2-thiouridine (mnm(5)s(2)U) at tRNA wobble positions. Accepts sulfur from TusA and transfers it in turn to TusE. The chain is Sulfurtransferase TusD from Escherichia coli O7:K1 (strain IAI39 / ExPEC).